The primary structure comprises 404 residues: tRNA-specific 2-thiouridylase MnmA (404 aa).

Residues 42–49 and leucine 68 contribute to the ATP site; that span reads GLSGGVDS. Cysteine 129 functions as the Nucleophile in the catalytic mechanism. A disulfide bond links cysteine 129 and cysteine 239. Residue glycine 154 coordinates ATP. An interaction with tRNA region spans residues 189–191; it reads KDQ. The active-site Cysteine persulfide intermediate is cysteine 239. Residues 344–345 are interaction with tRNA; it reads RY.

It belongs to the MnmA/TRMU family.

The protein resides in the cytoplasm. The enzyme catalyses S-sulfanyl-L-cysteinyl-[protein] + uridine(34) in tRNA + AH2 + ATP = 2-thiouridine(34) in tRNA + L-cysteinyl-[protein] + A + AMP + diphosphate + H(+). Its function is as follows. Catalyzes the 2-thiolation of uridine at the wobble position (U34) of tRNA, leading to the formation of s(2)U34. The chain is tRNA-specific 2-thiouridylase MnmA from Prochlorococcus marinus (strain NATL1A).